A 265-amino-acid polypeptide reads, in one-letter code: 4-diphosphocytidyl-2-C-methyl-D-erythritol kinase (265 aa).

The active site involves Lys-8. 95 to 105 (PIGAGLGGGSS) serves as a coordination point for ATP. Asp-135 is an active-site residue.

Belongs to the GHMP kinase family. IspE subfamily.

The enzyme catalyses 4-CDP-2-C-methyl-D-erythritol + ATP = 4-CDP-2-C-methyl-D-erythritol 2-phosphate + ADP + H(+). It functions in the pathway isoprenoid biosynthesis; isopentenyl diphosphate biosynthesis via DXP pathway; isopentenyl diphosphate from 1-deoxy-D-xylulose 5-phosphate: step 3/6. In terms of biological role, catalyzes the phosphorylation of the position 2 hydroxy group of 4-diphosphocytidyl-2C-methyl-D-erythritol. This is 4-diphosphocytidyl-2-C-methyl-D-erythritol kinase from Ureaplasma urealyticum serovar 10 (strain ATCC 33699 / Western).